Reading from the N-terminus, the 108-residue chain is UPF0060 membrane protein YnfA (108 aa).

The Periplasmic segment spans residues 1-5 (MIKTT). A helical membrane pass occupies residues 6–26 (LLFFATALCEIIGCFLPWLWL). At 27–30 (KRNA) the chain is on the cytoplasmic side. A helical transmembrane segment spans residues 31-51 (SIWLLLPAGISLALFVWLLTL). At 52–60 (HPAASGRVY) the chain is on the periplasmic side. Residues 61–81 (AAYGGVYVCTALMWLRVVDGV) form a helical membrane-spanning segment. Over 82–84 (KLS) the chain is Cytoplasmic. Residues 85 to 105 (LYDWTGALIALCGMLIIVAGW) traverse the membrane as a helical segment. Residues 106–108 (GRT) lie on the Periplasmic side of the membrane.

The protein belongs to the UPF0060 family.

The protein localises to the cell inner membrane. The polypeptide is UPF0060 membrane protein YnfA (Shigella flexneri serotype 5b (strain 8401)).